A 421-amino-acid chain; its full sequence is Stemmadenine O-acetyltransferase (421 aa).

Positions 1-21 (MAPQMQILSEELIQPSSPTPQ) are disordered. Residues His-160 and Asp-362 each act as proton acceptor in the active site.

Belongs to the plant acyltransferase family. Monomer. Expressed in leaf epidermis.

It carries out the reaction 15alpha-stemmadenine + acetyl-CoA = O-acetyl-15alpha-stemmadenine + CoA. The protein operates within alkaloid biosynthesis. Component of iboga and aspidosperma monoterpenoid indole alkaloids (MIAs, e.g. tabersonine and catharanthine) biosynthesis pathway from 19E-geissoschizine. Acetyltransferase that catalyzes the formation of O-acetylstemmadenine from stemmadenine. This is Stemmadenine O-acetyltransferase from Catharanthus roseus (Madagascar periwinkle).